The sequence spans 286 residues: Bifunctional protein FolD (286 aa).

NADP(+) is bound by residues 168-170 (GRG), Thr195, and Val236.

This sequence belongs to the tetrahydrofolate dehydrogenase/cyclohydrolase family. In terms of assembly, homodimer.

The catalysed reaction is (6R)-5,10-methylene-5,6,7,8-tetrahydrofolate + NADP(+) = (6R)-5,10-methenyltetrahydrofolate + NADPH. It carries out the reaction (6R)-5,10-methenyltetrahydrofolate + H2O = (6R)-10-formyltetrahydrofolate + H(+). It functions in the pathway one-carbon metabolism; tetrahydrofolate interconversion. In terms of biological role, catalyzes the oxidation of 5,10-methylenetetrahydrofolate to 5,10-methenyltetrahydrofolate and then the hydrolysis of 5,10-methenyltetrahydrofolate to 10-formyltetrahydrofolate. The chain is Bifunctional protein FolD from Mycolicibacterium gilvum (strain PYR-GCK) (Mycobacterium gilvum (strain PYR-GCK)).